A 495-amino-acid chain; its full sequence is UDP-glycosyltransferase 73C9 (495 aa).

Residue 23 to 26 (GHMI) participates in UDP-alpha-D-glucose binding. His24 functions as the Proton acceptor in the catalytic mechanism. The Charge relay role is filled by Asp129. UDP-alpha-D-glucose contacts are provided by residues 355 to 358 (WSPQ), 373 to 381 (HCGWNSTLE), and 397 to 398 (DQ).

The protein belongs to the UDP-glycosyltransferase family.

In terms of biological role, possesses very weak glucosyltransferase activity toward 2,4,5-trichlorophenol (TCP), when assayed with high concentrations of TCP. This Barbarea vulgaris (Yellow rocket) protein is UDP-glycosyltransferase 73C9.